Reading from the N-terminus, the 227-residue chain is Cytochrome c oxidase subunit 2 (227 aa).

Topologically, residues 1 to 14 (MAYPMQLGFQDATS) are mitochondrial intermembrane. The chain crosses the membrane as a helical span at residues 15–45 (PIMEELLHFHDHTLMIVFLISSLVLYIISLM). Topologically, residues 46-59 (LTTKLTHTSTMDAQ) are mitochondrial matrix. A helical transmembrane segment spans residues 60–87 (EVETIWTILPAIILIMIALPSLRILYMM). At 88–227 (DEINNPSLTV…YFEKWSASML (140 aa)) the chain is on the mitochondrial intermembrane side. Residues cysteine 196, glutamate 198, cysteine 200, histidine 204, and methionine 207 each coordinate Cu cation. Residue glutamate 198 participates in Mg(2+) binding. Tyrosine 218 carries the phosphotyrosine modification.

It belongs to the cytochrome c oxidase subunit 2 family. Component of the cytochrome c oxidase (complex IV, CIV), a multisubunit enzyme composed of 14 subunits. The complex is composed of a catalytic core of 3 subunits MT-CO1, MT-CO2 and MT-CO3, encoded in the mitochondrial DNA, and 11 supernumerary subunits COX4I, COX5A, COX5B, COX6A, COX6B, COX6C, COX7A, COX7B, COX7C, COX8 and NDUFA4, which are encoded in the nuclear genome. The complex exists as a monomer or a dimer and forms supercomplexes (SCs) in the inner mitochondrial membrane with NADH-ubiquinone oxidoreductase (complex I, CI) and ubiquinol-cytochrome c oxidoreductase (cytochrome b-c1 complex, complex III, CIII), resulting in different assemblies (supercomplex SCI(1)III(2)IV(1) and megacomplex MCI(2)III(2)IV(2)). Found in a complex with TMEM177, COA6, COX18, COX20, SCO1 and SCO2. Interacts with TMEM177 in a COX20-dependent manner. Interacts with COX20. Interacts with COX16. Cu cation is required as a cofactor.

Its subcellular location is the mitochondrion inner membrane. It catalyses the reaction 4 Fe(II)-[cytochrome c] + O2 + 8 H(+)(in) = 4 Fe(III)-[cytochrome c] + 2 H2O + 4 H(+)(out). Component of the cytochrome c oxidase, the last enzyme in the mitochondrial electron transport chain which drives oxidative phosphorylation. The respiratory chain contains 3 multisubunit complexes succinate dehydrogenase (complex II, CII), ubiquinol-cytochrome c oxidoreductase (cytochrome b-c1 complex, complex III, CIII) and cytochrome c oxidase (complex IV, CIV), that cooperate to transfer electrons derived from NADH and succinate to molecular oxygen, creating an electrochemical gradient over the inner membrane that drives transmembrane transport and the ATP synthase. Cytochrome c oxidase is the component of the respiratory chain that catalyzes the reduction of oxygen to water. Electrons originating from reduced cytochrome c in the intermembrane space (IMS) are transferred via the dinuclear copper A center (CU(A)) of subunit 2 and heme A of subunit 1 to the active site in subunit 1, a binuclear center (BNC) formed by heme A3 and copper B (CU(B)). The BNC reduces molecular oxygen to 2 water molecules using 4 electrons from cytochrome c in the IMS and 4 protons from the mitochondrial matrix. This Ovis aries (Sheep) protein is Cytochrome c oxidase subunit 2 (MT-CO2).